The following is a 138-amino-acid chain: Nucleoside diphosphate kinase (138 aa).

ATP contacts are provided by Lys9, Phe57, Arg85, Thr91, Arg102, and Asn112. The active-site Pros-phosphohistidine intermediate is the His115.

The protein belongs to the NDK family. In terms of assembly, homotetramer. It depends on Mg(2+) as a cofactor.

The protein localises to the cytoplasm. The enzyme catalyses a 2'-deoxyribonucleoside 5'-diphosphate + ATP = a 2'-deoxyribonucleoside 5'-triphosphate + ADP. It catalyses the reaction a ribonucleoside 5'-diphosphate + ATP = a ribonucleoside 5'-triphosphate + ADP. Its function is as follows. Major role in the synthesis of nucleoside triphosphates other than ATP. The ATP gamma phosphate is transferred to the NDP beta phosphate via a ping-pong mechanism, using a phosphorylated active-site intermediate. The protein is Nucleoside diphosphate kinase of Exiguobacterium sibiricum (strain DSM 17290 / CCUG 55495 / CIP 109462 / JCM 13490 / 255-15).